The sequence spans 462 residues: ATP synthase subunit beta (462 aa).

Position 151-158 (151-158 (GGAGVGKT)) interacts with ATP.

Belongs to the ATPase alpha/beta chains family. In terms of assembly, F-type ATPases have 2 components, CF(1) - the catalytic core - and CF(0) - the membrane proton channel. CF(1) has five subunits: alpha(3), beta(3), gamma(1), delta(1), epsilon(1). CF(0) has four main subunits: a(1), b(1), b'(1) and c(9-12).

It localises to the cell inner membrane. It carries out the reaction ATP + H2O + 4 H(+)(in) = ADP + phosphate + 5 H(+)(out). In terms of biological role, produces ATP from ADP in the presence of a proton gradient across the membrane. The catalytic sites are hosted primarily by the beta subunits. In Chlorobium chlorochromatii (strain CaD3), this protein is ATP synthase subunit beta.